The sequence spans 426 residues: UPF0229 protein Csal_0882 (426 aa).

Over residues 82 to 93 the composition is skewed to basic and acidic residues; sequence FVEGDRLRRPGG. Positions 82–109 are disordered; sequence FVEGDRLRRPGGEGRGGSGEGSASNQGE.

It belongs to the UPF0229 family.

This is UPF0229 protein Csal_0882 from Chromohalobacter salexigens (strain ATCC BAA-138 / DSM 3043 / CIP 106854 / NCIMB 13768 / 1H11).